Reading from the N-terminus, the 264-residue chain is Vitellin-degrading protease (264 aa).

A signal peptide spans 1–15; sequence MTNSLLICFTILGLA. The propeptide at 16-27 is activation peptide; it reads ASSPTKPIGDIR. Residues 28–253 enclose the Peptidase S1 domain; the sequence is IVGGEDIVIT…LREWVDENIT (226 aa). An intrachain disulfide couples Cys-53 to Cys-69. Residues His-68 and Asp-113 each act as charge relay system in the active site. The cysteines at positions 178 and 194 are disulfide-linked. Asp-203 contacts substrate. Cysteines 205 and 229 form a disulfide. Residue Ser-209 is the Charge relay system of the active site. The N-linked (GlcNAc...) asparagine glycan is linked to Asn-251.

The protein belongs to the peptidase S1 family. Cleavage after Arg-27 leads to beta-VTN protease and subsequent cleavage after Arg-89 leads to alpha-VTN.

In terms of biological role, responsible for the degradation of vitellin in eggs at the head pigmentation stage. This chain is Vitellin-degrading protease, found in Bombyx mori (Silk moth).